The following is a 69-amino-acid chain: FMRFamide-like neuropeptides 24 (69 aa).

The N-terminal stretch at 1-25 is a signal peptide; that stretch reads MLSSRTSSIILILAILVAIMAVAQC. The propeptide occupies 26-51; sequence RNIQYDVEEMTPEAAFRYAQWGEIPH. Phenylalanine amide is present on phenylalanine 64. A propeptide spanning residues 68-69 is cleaved from the precursor; the sequence is SI.

The protein belongs to the FARP (FMRFamide related peptide) family.

Its subcellular location is the secreted. Probable FMRFamide-like neuropeptides. Plays a role in behaviors associated with a sleep-like state induced by stress (SIS), acting in concert with the FMRFamide related peptide flp-13 and neuropeptide-like protein nlp-8. In Caenorhabditis elegans, this protein is FMRFamide-like neuropeptides 24.